The sequence spans 467 residues: Regulatory protein NPR6 (467 aa).

A BTB domain is found at 27 to 111 (SDVTFSVEGR…LYSGQVSIVP (85 aa)). The segment at 117-131 (RSNCGDRGCWHTHCT) adopts a C2HC NPR-type zinc-finger fold. Residues C120, C125, H127, and C130 each coordinate Zn(2+). ANK repeat units lie at residues 247-276 (QKIR…LNLD), 277-306 (ESLA…DVNY), 311-340 (TGKT…DPNV), and 344-378 (DGIT…KLRL). The interval 434–467 (RDIGDDNSNQREGMNLHHHHHDPSTMYHHHHHHF) is disordered. The span at 449 to 467 (LHHHHHDPSTMYHHHHHHF) shows a compositional bias: basic residues.

This sequence belongs to the plant 'ANKYRIN-BTB/POZ' family. 'NOOT-BOP-COCH-like' (NBCL) subfamily. As to quaternary structure, homodimer or heterodimer with BOP2. Interacts with PAN.

It is found in the cytoplasm. It localises to the nucleus. It functions in the pathway protein modification; protein ubiquitination. In terms of biological role, may act as a substrate-specific adapter of an E3 ubiquitin-protein ligase complex (CUL3-RBX1-BTB) which mediates the ubiquitination and subsequent proteasomal degradation of target proteins. Acts redundantly with BOP2. BOP1/2 promote leaf and floral meristem fate and determinacy in a pathway targeting AP1 and AGL24. BOP1/2 act as transcriptional co-regulators through direct interaction with TGA factors, including PAN, a direct regulator of AP1. Controls lateral organ fate through positive regulation of adaxial-abaxial polarity genes ATHB-14/PHB, YAB1/FIL and YAB3, and through positive regulation of LOB domain-containing genes LOB, LBD6/AS2 and LBD36. Promotes and maintains a developmentally determinate state in leaf cells through the negative regulation of JAG, JGL and class I KNOX genes. Is also involved in nectary development, formation of normal abscission zones (AZs) and suppression of bract formation, probably by regulating the cell wall disorganization. This Arabidopsis thaliana (Mouse-ear cress) protein is Regulatory protein NPR6.